The chain runs to 599 residues: Proline dehydrogenase 1, mitochondrial (599 aa).

Disordered regions lie at residues 20-39 (STKP…LRGC) and 152-180 (EEAE…EKQY). A compositionally biased stretch (low complexity) spans 23 to 39 (PQAQEQPPASPEALRGC). Residues 153 to 180 (EAERKEMESCTSEAERDGSGANKREKQY) show a composition bias toward basic and acidic residues. An N6-acetyllysine mark is found at lysine 356, lysine 367, and lysine 485.

Belongs to the proline oxidase family. FAD serves as cofactor. In terms of tissue distribution, expressed in liver, kidney, heart and to a lesser extent in brain, lung and muscle.

The protein localises to the mitochondrion matrix. The enzyme catalyses L-proline + a quinone = (S)-1-pyrroline-5-carboxylate + a quinol + H(+). It functions in the pathway amino-acid degradation; L-proline degradation into L-glutamate; L-glutamate from L-proline: step 1/2. Converts proline to delta-1-pyrroline-5-carboxylate. This Mus musculus (Mouse) protein is Proline dehydrogenase 1, mitochondrial (Prodh).